Reading from the N-terminus, the 570-residue chain is Periplasmic trehalase (570 aa).

Residues 1–34 (MITPALRHSGTLSFAIKLTVASTLLTFASLSAHA) form the signal peptide. Substrate contacts are provided by residues R157, 164–165 (WD), N201, 210–212 (RSQ), 282–284 (RPE), and G315. Residues D317 and E501 each act as proton donor/acceptor in the active site. E516 contacts substrate. Residues 542-570 (KPCDSVPATRPAAPGASQPAPQKQVETTP) form a disordered region. The segment covering 552–570 (PAAPGASQPAPQKQVETTP) has biased composition (low complexity).

It belongs to the glycosyl hydrolase 37 family. As to quaternary structure, monomer.

Its subcellular location is the periplasm. The catalysed reaction is alpha,alpha-trehalose + H2O = alpha-D-glucose + beta-D-glucose. In terms of biological role, provides the cells with the ability to utilize trehalose at high osmolarity by splitting it into glucose molecules that can subsequently be taken up by the phosphotransferase-mediated uptake system. This is Periplasmic trehalase from Citrobacter koseri (strain ATCC BAA-895 / CDC 4225-83 / SGSC4696).